A 360-amino-acid chain; its full sequence is Peptide chain release factor 1 (360 aa).

At Gln-235 the chain carries N5-methylglutamine. The segment covering 285–295 (RQAAEQTDMRR) has biased composition (basic and acidic residues). The interval 285-309 (RQAAEQTDMRRNLLGSGDRSDKIRT) is disordered.

The protein belongs to the prokaryotic/mitochondrial release factor family. Post-translationally, methylated by PrmC. Methylation increases the termination efficiency of RF1.

The protein localises to the cytoplasm. Functionally, peptide chain release factor 1 directs the termination of translation in response to the peptide chain termination codons UAG and UAA. This Haemophilus influenzae (strain ATCC 51907 / DSM 11121 / KW20 / Rd) protein is Peptide chain release factor 1 (prfA).